The chain runs to 174 residues: Nicotinamide-nucleotide adenylyltransferase (174 aa).

It belongs to the archaeal NMN adenylyltransferase family.

It localises to the cytoplasm. It carries out the reaction beta-nicotinamide D-ribonucleotide + ATP + H(+) = diphosphate + NAD(+). Its pathway is cofactor biosynthesis; NAD(+) biosynthesis; NAD(+) from nicotinamide D-ribonucleotide: step 1/1. The polypeptide is Nicotinamide-nucleotide adenylyltransferase (Methanospirillum hungatei JF-1 (strain ATCC 27890 / DSM 864 / NBRC 100397 / JF-1)).